A 119-amino-acid chain; its full sequence is MIGIDIVSIARVEKCVKRFKMRFLERFLSPSEIVLCKDKSSSIAGFFALKEACSKALQVGIGKELSFLDIKISKSPKNAPLITLSKEKMDYFNIQSLSASISHDAGFAIAVVMVSSLNR.

Asp-5 and Glu-51 together coordinate Mg(2+).

The protein belongs to the P-Pant transferase superfamily. AcpS family. It depends on Mg(2+) as a cofactor.

The protein localises to the cytoplasm. It carries out the reaction apo-[ACP] + CoA = holo-[ACP] + adenosine 3',5'-bisphosphate + H(+). Its function is as follows. Transfers the 4'-phosphopantetheine moiety from coenzyme A to a Ser of acyl-carrier-protein. The sequence is that of Holo-[acyl-carrier-protein] synthase from Helicobacter pylori (strain HPAG1).